Reading from the N-terminus, the 134-residue chain is MGRDTIAEIITSIRNADMDRKRVVRIASTNITENIVQILLREGFIENVRKHRENNKYFLVLTLRYRRNRKRPYRNILNLKRISRPGLRIYSNYQRIPRILGGMGIVILSTSRGIMTDREARLEGIGGEILCYIW.

This sequence belongs to the universal ribosomal protein uS8 family. Part of the 30S ribosomal subunit.

It is found in the plastid. The protein resides in the chloroplast. In terms of biological role, one of the primary rRNA binding proteins, it binds directly to 16S rRNA central domain where it helps coordinate assembly of the platform of the 30S subunit. In Nicotiana tomentosiformis (Tobacco), this protein is Small ribosomal subunit protein uS8c (rps8).